Consider the following 198-residue polypeptide: Alpha-S1-casein (198 aa).

The N-terminal stretch at methionine 1 to alanine 15 is a signal peptide. 2 disordered regions span residues glutamine 28 to glutamate 47 and serine 71 to histidine 97. Serine 39, serine 80, serine 81, serine 83, serine 84, and serine 85 each carry phosphoserine.

It belongs to the alpha-casein family. As to expression, mammary gland specific. Secreted in milk.

It is found in the secreted. Its function is as follows. Important role in the capacity of milk to transport calcium phosphate. This Cavia porcellus (Guinea pig) protein is Alpha-S1-casein (CSN1S1).